A 311-amino-acid polypeptide reads, in one-letter code: Hevamine-A (311 aa).

The N-terminal stretch at 1–26 (MAKRTQAILLLLLAISLIMSSSHVDG) is a signal peptide. Residues 27-302 (GGIAIYWGQN…SSILDSVLFL (276 aa)) enclose the GH18 domain. Disulfide bonds link cysteine 46–cysteine 93 and cysteine 76–cysteine 83. Glutamate 153 acts as the Proton donor in catalysis. A disulfide bridge connects residues cysteine 185 and cysteine 214. A propeptide spans 300-311 (LFLHSEECMTVL) (removed in mature form).

The protein belongs to the glycosyl hydrolase 18 family. Chitinase class II subfamily.

The protein resides in the vacuole. The catalysed reaction is Random endo-hydrolysis of N-acetyl-beta-D-glucosaminide (1-&gt;4)-beta-linkages in chitin and chitodextrins.. The enzyme catalyses Hydrolysis of (1-&gt;4)-beta-linkages between N-acetylmuramic acid and N-acetyl-D-glucosamine residues in a peptidoglycan and between N-acetyl-D-glucosamine residues in chitodextrins.. Functionally, bifunctional enzyme with lysozyme / chitinase activity. May have a role in plugging the latex vessel and cessation of latex flow. This Hevea brasiliensis (Para rubber tree) protein is Hevamine-A.